We begin with the raw amino-acid sequence, 123 residues long: Pre-B lymphocyte protein 3 (123 aa).

An N-terminal signal peptide occupies residues 1-20 (MACRCLSFLLMGTFLSVSQT). One can recognise an Ig-like domain in the interval 21–123 (VLAQLDALLV…YCSVGYGFSP (103 aa)). A disulfide bridge links Cys40 with Cys115.

Belongs to the immunoglobulin superfamily. In terms of tissue distribution, expressed in B-cell precursors. Expressed in fetal liver, bone marrow, spleen and lymph node.

In terms of biological role, associates with the Ig-mu chain to form a molecular complex that is expressed on the surface of pre-B-cells. In Homo sapiens (Human), this protein is Pre-B lymphocyte protein 3 (VPREB3).